We begin with the raw amino-acid sequence, 299 residues long: tRNA dimethylallyltransferase (299 aa).

Residue 5-12 participates in ATP binding; sequence GPTASGKT. Residue 7–12 coordinates substrate; that stretch reads TASGKT. Interaction with substrate tRNA stretches follow at residues 30-33, 154-158, and 235-240; these read DSAL, QRLSR, and RCVGYR.

This sequence belongs to the IPP transferase family. Monomer. It depends on Mg(2+) as a cofactor.

The catalysed reaction is adenosine(37) in tRNA + dimethylallyl diphosphate = N(6)-dimethylallyladenosine(37) in tRNA + diphosphate. In terms of biological role, catalyzes the transfer of a dimethylallyl group onto the adenine at position 37 in tRNAs that read codons beginning with uridine, leading to the formation of N6-(dimethylallyl)adenosine (i(6)A). The sequence is that of tRNA dimethylallyltransferase from Shewanella denitrificans (strain OS217 / ATCC BAA-1090 / DSM 15013).